Consider the following 359-residue polypeptide: uncharacterized protein (359 aa).

A Protein kinase domain is found at 43-309; sequence YHLIRKLGSG…VLDFLGDDWG (267 aa). Residues 49-57 and Lys-72 each bind ATP; that span reads LGSGSYGRV. Asp-163 (proton acceptor) is an active-site residue. The disordered stretch occupies residues 314–359; it reads REGPGVLGSAVSYEDREEGGSSLEEWTDEGDDSKSGGRTGTDGGAP. Positions 350–359 are enriched in gly residues; that stretch reads GRTGTDGGAP.

It belongs to the protein kinase superfamily. Ser/Thr protein kinase family. STKL subfamily.

The enzyme catalyses L-seryl-[protein] + ATP = O-phospho-L-seryl-[protein] + ADP + H(+). It catalyses the reaction L-threonyl-[protein] + ATP = O-phospho-L-threonyl-[protein] + ADP + H(+). This is an uncharacterized protein from Homo sapiens (Human).